We begin with the raw amino-acid sequence, 274 residues long: Purine nucleoside phosphorylase 1 (274 aa).

Phosphate-binding positions include Ser-29, His-60, 80–82, and Ala-112; that span reads RFH. Residue Ser-29 is modified to Phosphoserine. Glu-192 is a binding site for a purine D-ribonucleoside. Residue Ser-211 coordinates phosphate. Position 234 (Asn-234) interacts with a purine D-ribonucleoside.

It belongs to the PNP/MTAP phosphorylase family. Homotrimer.

It carries out the reaction a purine D-ribonucleoside + phosphate = a purine nucleobase + alpha-D-ribose 1-phosphate. The enzyme catalyses a purine 2'-deoxy-D-ribonucleoside + phosphate = a purine nucleobase + 2-deoxy-alpha-D-ribose 1-phosphate. It functions in the pathway purine metabolism; purine nucleoside salvage. In terms of biological role, the purine nucleoside phosphorylases catalyze the phosphorolytic breakdown of the N-glycosidic bond in the beta-(deoxy)ribonucleoside molecules, with the formation of the corresponding free purine bases and pentose-1-phosphate. Cleaves guanosine, inosine, 2'-deoxyguanosine and 2'-deoxyinosine. The protein is Purine nucleoside phosphorylase 1 (punA) of Geobacillus stearothermophilus (Bacillus stearothermophilus).